The following is a 583-amino-acid chain: Inactive carboxylesterase-like protein VdtD (583 aa).

The signal sequence occupies residues 1 to 23 (MFMTQIVFGIAPTLLKTFSHLTA). N-linked (GlcNAc...) asparagine glycosylation is found at Asn84, Asn109, Asn221, Asn265, Asn307, Asn350, Asn388, Asn448, and Asn468.

Belongs to the type-B carboxylesterase/lipase family.

The protein operates within secondary metabolite biosynthesis. Functionally, inactive carboxylesterase-like protein; part of the gene cluster that mediates the biosynthesis of viriditoxin, one of the 'classical' secondary metabolites produced by fungi and that has antibacterial activity. The first step is performed by the polyketide synthase VdtA which condenses one acetyl-CoA and 6 malonyl-CoA units to form the heptaketide monomer backbone of viriditoxin. The product of VdtA is then O-methylated on C7 by the O-methyltransferase VdtC. The O-methyl group is important for the stereoselective coupling of the monomers at the final step of viriditoxin biosynthesis. The short-chain dehydrogenase/reductase VdtF then acts as a stereospecific reductase converting the pyrone to dihydropyrone via the reduction of the C3-C4 double bond. The FAD-binding monooxygenase VdtE then converts the ketone group into a methyl-ester group to yield semi-viriditoxin. Finally, the laccase VdtB is involved in dimerization of 2 semi-viriditoxin molecules to yield the final viriditoxin. VdtB is responsible for the regioselective 6,6'-coupling of semi-viriditoxin, which yields (M)-viriditoxin and (P)-viriditoxin at a ratio of 1:2. The non-catalytic carboxylesterase-like protein VdtD affects the stereochemistical outcome of the coupling. The highly reducing polyketide synthase VdtX is not involved in viriditoxin synthesis, but might possibly play a role in the production of additional metabolites not identified yet. This is Inactive carboxylesterase-like protein VdtD from Byssochlamys spectabilis (Paecilomyces variotii).